The sequence spans 138 residues: Sporulation-specific protein 13 (138 aa).

The segment covering 1–11 (MMSNSQISKLF) has biased composition (polar residues). Residues 1–31 (MMSNSQISKLFSSISNKENSNENALKESTNK) form a disordered region. The span at 12–23 (SSISNKENSNEN) shows a compositional bias: low complexity. Residues 16–104 (NKENSNENAL…KRELDYLRAK (89 aa)) adopt a coiled-coil conformation.

Interacts with spo2.

It is found in the cytoplasm. The protein localises to the cytoskeleton. The protein resides in the microtubule organizing center. It localises to the spindle pole body. In terms of biological role, involved in sporulation. Plays a significant role in modification of the spindle pole body prior to spore formation and is required for initiating forespore membrane formation. The protein is Sporulation-specific protein 13 (spo13) of Schizosaccharomyces pombe (strain 972 / ATCC 24843) (Fission yeast).